The following is a 154-amino-acid chain: 17.7 kDa class I heat shock protein (154 aa).

The sHSP domain occupies 40 to 154 (ETSAFANTRI…PDVKSIEISG (115 aa)).

It belongs to the small heat shock protein (HSP20) family. In terms of assembly, forms oligomeric structures.

The protein localises to the cytoplasm. In Solanum peruvianum (Peruvian tomato), this protein is 17.7 kDa class I heat shock protein.